The primary structure comprises 27 residues: Caerulein precursor fragment R7 (27 aa).

Expressed by the skin glands.

It localises to the secreted. Functionally, antimicrobial peptide. The sequence is that of Caerulein precursor fragment R7 from Xenopus ruwenzoriensis (Uganda clawed frog).